A 274-amino-acid polypeptide reads, in one-letter code: Undecaprenyl-diphosphatase (274 aa).

The next 6 membrane-spanning stretches (helical) occupy residues 44–64 (AKVF…LVYW), 85–105 (LNVL…GKAI), 109–129 (LFTP…ILWA), 185–205 (ATDY…VYSL), 215–235 (ADIP…WLCV), and 250–270 (FAWY…SGLV).

Belongs to the UppP family.

Its subcellular location is the cell inner membrane. It catalyses the reaction di-trans,octa-cis-undecaprenyl diphosphate + H2O = di-trans,octa-cis-undecaprenyl phosphate + phosphate + H(+). Catalyzes the dephosphorylation of undecaprenyl diphosphate (UPP). Confers resistance to bacitracin. The sequence is that of Undecaprenyl-diphosphatase from Acidovorax ebreus (strain TPSY) (Diaphorobacter sp. (strain TPSY)).